The chain runs to 325 residues: Ferrochelatase (325 aa).

Fe cation is bound by residues histidine 195 and glutamate 276.

The protein belongs to the ferrochelatase family.

It localises to the cytoplasm. It carries out the reaction heme b + 2 H(+) = protoporphyrin IX + Fe(2+). It functions in the pathway porphyrin-containing compound metabolism; protoheme biosynthesis; protoheme from protoporphyrin-IX: step 1/1. Its function is as follows. Catalyzes the ferrous insertion into protoporphyrin IX. The chain is Ferrochelatase from Methylococcus capsulatus (strain ATCC 33009 / NCIMB 11132 / Bath).